The chain runs to 241 residues: Proteasome subunit alpha (241 aa).

This sequence belongs to the peptidase T1A family. The 20S proteasome core is composed of 14 alpha and 14 beta subunits that assemble into four stacked heptameric rings, resulting in a barrel-shaped structure. The two inner rings, each composed of seven catalytic beta subunits, are sandwiched by two outer rings, each composed of seven alpha subunits. The catalytic chamber with the active sites is on the inside of the barrel. Has a gated structure, the ends of the cylinder being occluded by the N-termini of the alpha-subunits. Is capped at one or both ends by the proteasome regulatory ATPase, PAN.

The protein localises to the cytoplasm. With respect to regulation, the formation of the proteasomal ATPase PAN-20S proteasome complex, via the docking of the C-termini of PAN into the intersubunit pockets in the alpha-rings, triggers opening of the gate for substrate entry. Interconversion between the open-gate and close-gate conformations leads to a dynamic regulation of the 20S proteasome proteolysis activity. Its function is as follows. Component of the proteasome core, a large protease complex with broad specificity involved in protein degradation. The sequence is that of Proteasome subunit alpha from Methanosphaerula palustris (strain ATCC BAA-1556 / DSM 19958 / E1-9c).